The sequence spans 411 residues: UPF0754 membrane protein Npun_R4433 (411 aa).

2 consecutive transmembrane segments (helical) span residues 3–23 and 387–407; these read WSHL…GYFT and IVTL…VFLV.

This sequence belongs to the UPF0754 family.

Its subcellular location is the cell inner membrane. The protein is UPF0754 membrane protein Npun_R4433 of Nostoc punctiforme (strain ATCC 29133 / PCC 73102).